The following is a 943-amino-acid chain: Mechanosensitive ion channel protein BA (943 aa).

The segment at 1-67 (MPNPNDVTID…PPSSSLGFGH (67 aa)) is disordered. Over 1–107 (MPNPNDVTID…AVLNFSTVTR (107 aa)) the chain is Cytoplasmic. Polar residues predominate over residues 14-37 (TSVSSRGQTGARNNSTNIPNSPSG). The chain crosses the membrane as a helical span at residues 108-130 (YLIYIAPLAALLAIPIIVGATAA). The Lumenal segment spans residues 131 to 149 (EDAKIGGVSLPWFFCWVEV). The chain crosses the membrane as a helical span at residues 150–175 (VWVSLWVCKLVAKVIPFVFQFVCGIV). Residues 176–195 (SAGTRKYALILRNLEIPITM) are Cytoplasmic-facing. Residues 196 to 214 (VLWMIVSLVTFLPIMVYNP) traverse the membrane as a helical segment. The Lumenal portion of the chain corresponds to 215–233 (RNKREGDTETKSWEKSVKN). The chain crosses the membrane as a helical span at residues 234–259 (VLFAFLVCALIFLGEKTLVQLISISY). Over 260–468 (HRKQFDARIK…DQAIHVLDNL (209 aa)) the chain is Cytoplasmic. An EF-hand domain is found at 412–447 (GKEAEAEECFTMLDRDGNGDISLDEIILAISEIGRT). The Ca(2+) site is built by aspartate 425, aspartate 427, asparagine 429, aspartate 431, and glutamate 436. Residues 469–489 (LATIAFIIAVLVFVSFVTSGF) form a helical membrane-spanning segment. The Lumenal segment spans residues 490 to 502 (GTVIAAGATSLLS). A helical transmembrane segment spans residues 503–523 (LSFVFATTAQEVLGSCIFLFV). At 524–943 (KHPFDIGDRV…QRRNYESRRL (420 aa)) the chain is on the cytoplasmic side. Residues 677–943 (PGAAAEDAAA…QRRNYESRRL (267 aa)) form a disordered region. Composition is skewed to low complexity over residues 678–687 (GAAAEDAAAA) and 744–759 (GASA…AGSA). Polar residues predominate over residues 760-781 (YSETTLNNTVSEPYQRSFTPNT). Over residues 798–810 (TERHLGVSHDSIA) the composition is skewed to basic and acidic residues. Residues 827 to 842 (TTANQSLASPTTMQSE) are compositionally biased toward polar residues. The segment covering 857-880 (PSSSQYSQQYPQQQSQSPYSYTYS) has biased composition (low complexity). The span at 886 to 904 (PESSLQPLEHTTSYNQSLP) shows a compositional bias: polar residues. Positions 916–943 (NSLEGHSPHVDPRHMTEEQRRNYESRRL) are enriched in basic and acidic residues.

This sequence belongs to the MscS (TC 1.A.23) family.

The protein resides in the cell membrane. The catalysed reaction is Ca(2+)(in) = Ca(2+)(out). In terms of biological role, acts as a mechanosensitive calcium channel in response to membrane stretch. Regulates intracellular calcium levels and cell volume for survival in response to hypo-osmotic shock. Involved in maintaining vacuole integrity and protecting the nuclear envelope upon hypo-osmotic shock. seems to contribute to CaCl2 toxicityIn contracstz to mscA, mscB seems to contribute to CaCl(2) toxicity. The polypeptide is Mechanosensitive ion channel protein BA (Emericella nidulans (strain FGSC A4 / ATCC 38163 / CBS 112.46 / NRRL 194 / M139) (Aspergillus nidulans)).